Consider the following 527-residue polypeptide: Cytokinin dehydrogenase 3 (527 aa).

An N-terminal signal peptide occupies residues M1 to P22. An FAD-binding PCMH-type domain is found at L52 to A231. A87, G89, and G91 together coordinate FAD. H92 carries the post-translational modification Pros-8alpha-FAD histidine. The FAD site is built by S93, Q97, D155, T160, S166, I170, and I221. The N-linked (GlcNAc...) asparagine glycan is linked to N413. FAD is bound by residues Y471 and Q509.

This sequence belongs to the oxygen-dependent FAD-linked oxidoreductase family. Monomer. FAD is required as a cofactor. As to expression, expressed in inflorescence meristems. Highly expressed in lamina joints, and mainly in the parenchyma cells and vascular bundles on the abaxial side of the lamina joint. Expressed in roots, stems, leaves and young panicles.

It is found in the endoplasmic reticulum. It catalyses the reaction N(6)-dimethylallyladenine + A + H2O = 3-methyl-2-butenal + adenine + AH2. Catalyzes the oxidation of cytokinins, a family of N(6)-substituted adenine derivatives, where the substituent is an isopentenyl group. Cytokinins are plant hormones essential for plant growth, development, and stress responses. Exhibits specific activities toward trans-zeatin (tZ) and isopentenyladenine (iP). Plays a role in lamina joint inclination. Regulates cell proliferation and vascular bundle number on the abaxial side of lamina joint. The polypeptide is Cytokinin dehydrogenase 3 (Oryza sativa subsp. japonica (Rice)).